The primary structure comprises 217 residues: Peptide methionine sulfoxide reductase MsrA 1 (217 aa).

Cys57 is an active-site residue.

It belongs to the MsrA Met sulfoxide reductase family.

The catalysed reaction is L-methionyl-[protein] + [thioredoxin]-disulfide + H2O = L-methionyl-(S)-S-oxide-[protein] + [thioredoxin]-dithiol. It carries out the reaction [thioredoxin]-disulfide + L-methionine + H2O = L-methionine (S)-S-oxide + [thioredoxin]-dithiol. Has an important function as a repair enzyme for proteins that have been inactivated by oxidation. Catalyzes the reversible oxidation-reduction of methionine sulfoxide in proteins to methionine. The polypeptide is Peptide methionine sulfoxide reductase MsrA 1 (msrA1) (Rhizobium meliloti (strain 1021) (Ensifer meliloti)).